The following is a 401-amino-acid chain: Nodal homolog 3-B (401 aa).

The N-terminal stretch at 1-18 (MAFLSLFLCLVFSSPLMA) is a signal peptide. Residues 19 to 274 (MPPALQGRKA…KVNGFRRLRR (256 aa)) constitute a propeptide that is removed on maturation. N-linked (GlcNAc...) asparagine glycans are attached at residues N168, N337, and N344. Cystine bridges form between C299-C365 and C328-C396.

Belongs to the TGF-beta family. In terms of assembly, monomer. The propeptide region interacts with bmp4 in a non-covalent manner. Expressed in the dorsal marginal region of late blastula, becoming restricted to the Spemann organizer at the early gastrula stage.

Its subcellular location is the secreted. In terms of biological role, exhibits mesoderm-dorsalizing activity and neural-inducing activity, but lacks mesoderm-inducing activity. Regulates the expression of specific mesodermal and neural genes. Induces convergent extension movements at the embryonic midline by activating the fgf signaling pathway to induce t/bra expression in the organizer region. Acts with wnt11 to induce Spemann organizer cells and induce axis formation. The unprocessed protein antagonizes bmp-signaling. The sequence is that of Nodal homolog 3-B from Xenopus tropicalis (Western clawed frog).